The primary structure comprises 327 residues: Putative cyclin-dependent kinase F-2 (327 aa).

Positions 4-295 constitute a Protein kinase domain; the sequence is YECLGKIGEG…AADALRCAWF (292 aa). Residues 10 to 18 and K33 contribute to the ATP site; that span reads IGEGAAGVV. Catalysis depends on D134, which acts as the Proton acceptor. T167 is modified (phosphothreonine).

This sequence belongs to the protein kinase superfamily. CMGC Ser/Thr protein kinase family. CDC2/CDKX subfamily.

The catalysed reaction is L-seryl-[protein] + ATP = O-phospho-L-seryl-[protein] + ADP + H(+). It carries out the reaction L-threonyl-[protein] + ATP = O-phospho-L-threonyl-[protein] + ADP + H(+). The enzyme catalyses [DNA-directed RNA polymerase] + ATP = phospho-[DNA-directed RNA polymerase] + ADP + H(+). The sequence is that of Putative cyclin-dependent kinase F-2 (CDKF-2) from Oryza sativa subsp. japonica (Rice).